Here is a 289-residue protein sequence, read N- to C-terminus: Serine/threonine-protein phosphatase Pgam5, mitochondrial (289 aa).

It belongs to the phosphoglycerate mutase family. BPG-dependent PGAM subfamily. As to quaternary structure, interacts with Pk92B/ASK1.

It is found in the mitochondrion outer membrane. It catalyses the reaction O-phospho-L-seryl-[protein] + H2O = L-seryl-[protein] + phosphate. The enzyme catalyses O-phospho-L-threonyl-[protein] + H2O = L-threonyl-[protein] + phosphate. Displays phosphatase activity for serine/threonine residues, and dephosphorylates and activates Pk92B kinase. Has apparently no phosphoglycerate mutase activity. The chain is Serine/threonine-protein phosphatase Pgam5, mitochondrial from Drosophila mojavensis (Fruit fly).